The following is a 467-amino-acid chain: Argininosuccinate lyase (467 aa).

Belongs to the lyase 1 family. Argininosuccinate lyase subfamily.

Its subcellular location is the cytoplasm. It catalyses the reaction 2-(N(omega)-L-arginino)succinate = fumarate + L-arginine. The protein operates within amino-acid biosynthesis; L-arginine biosynthesis; L-arginine from L-ornithine and carbamoyl phosphate: step 3/3. This Rhizobium etli (strain CIAT 652) protein is Argininosuccinate lyase.